We begin with the raw amino-acid sequence, 133 residues long: Small ribosomal subunit protein uS11 (133 aa).

This sequence belongs to the universal ribosomal protein uS11 family. In terms of assembly, part of the 30S ribosomal subunit. Interacts with proteins S7 and S18. Binds to IF-3.

In terms of biological role, located on the platform of the 30S subunit, it bridges several disparate RNA helices of the 16S rRNA. Forms part of the Shine-Dalgarno cleft in the 70S ribosome. In Ralstonia pickettii (strain 12J), this protein is Small ribosomal subunit protein uS11.